The primary structure comprises 829 residues: Venom phosphodiesterase CdcPDE (829 aa).

2 SMB domains span residues 8–51 (PQVS…VLPT) and 52–96 (QSWS…GETS). Intrachain disulfides connect C12/C16, C12/C29, C16/C47, C27/C29, C27/C40, C33/C39, C40/C47, C56/C61, C56/C73, C61/C91, C71/C73, C71/C84, C77/C83, C84/C91, C102/C148, and C110/C322. The N-linked (GlcNAc...) asparagine glycan is linked to N17. The Cell attachment site signature appears at 36-38 (RQA). Positions 125 and 163 each coordinate a divalent metal cation. T163 functions as the AMP-threonine intermediate in the catalytic mechanism. Residues N194 and N237 are each glycosylated (N-linked (GlcNAc...) asparagine). Residue K249 participates in AMP binding. Residues D283, H287, D330, and H331 each contribute to the a divalent metal cation site. H287 contacts AMP. Disulfide bonds link C338/C435, C386/C771, C519/C577, C532/C632, C534/C617, and C740/C750. Residue N383 is glycosylated (N-linked (GlcNAc...) asparagine). H440 contacts a divalent metal cation. 2 N-linked (GlcNAc...) asparagine glycosylation sites follow: N572 and N652.

Belongs to the nucleotide pyrophosphatase/phosphodiesterase family. As to quaternary structure, monomer. Requires a divalent metal cation as cofactor. N-glycosylated. Glycosylation counts for an increased mass of ~9%. Post-translationally, contains 16 disulfide bonds. As to expression, expressed by venom gland.

It localises to the secreted. The enzyme catalyses ADP + H2O = AMP + phosphate + H(+). In terms of biological role, hydrolyzes ADP with high activity. Shows weak or no activity on 5'-AMP, 5'-GMP, 3'-AMP, ATP, cAMP, and cGMP. Is devoid of monophosphatase and proteinase activities. Inhibits ADP-induced platelet aggregation and is cytotoxic to human keratinocytes. Kinetic parameters indicated a higher affinity for the substrate bis(p-nitrophenyl) phosphate compared to others snake venom PDEs. Is recognized by the crotalid antivenom produced by the Instituto Butantan. The sequence is that of Venom phosphodiesterase CdcPDE from Crotalus durissus collilineatus (Brazilian rattlesnake).